The primary structure comprises 264 residues: tRNA pseudouridine synthase A (264 aa).

The active-site Nucleophile is the Asp-51. A substrate-binding site is contributed by Tyr-109.

It belongs to the tRNA pseudouridine synthase TruA family. In terms of assembly, homodimer.

The enzyme catalyses uridine(38/39/40) in tRNA = pseudouridine(38/39/40) in tRNA. Functionally, formation of pseudouridine at positions 38, 39 and 40 in the anticodon stem and loop of transfer RNAs. The protein is tRNA pseudouridine synthase A of Vibrio campbellii (strain ATCC BAA-1116).